Reading from the N-terminus, the 661-residue chain is Cartilage acidic protein 1 (661 aa).

A signal peptide spans 1–27 (MAPSADPGMSRMLPFLLLLWFLPITEG). The stretch at 46–88 (DYDSNPTQLNYGVAVTDVDHDGDFEIVVAGYNGPNLVLKYDRA) is one FG-GAP 1; atypical repeat. The FG-GAP 2; atypical repeat unit spans residues 105-147 (YALRDRQGNAIGVTACDIDGDGREEIYFLNTNNAFSGVATYTD). Residues 283–333 (AGVDDPHQHGRGVALADFNRDGKVDIVYGNWNGPHRLYLQMSTHGKVRFRD) form an FG-GAP 3; atypical repeat. The stretch at 395 to 437 (GDALEPEGRGTGGVVTDFDGDGMLDLILSHGESMAQPLSVFRG) is one FG-GAP 4; atypical repeat. An EGF-like domain is found at 559-605 (DTNECIQFPFVCPRDKPVCVNTYGSYRCRTNKKCSRGYEPNEDGTAC). Cystine bridges form between C563/C577, C570/C586, and C592/C605. T608, T618, T619, T621, and T626 each carry an O-linked (GalNAc...) threonine glycan.

Post-translationally, O-glycosylated. In terms of tissue distribution, expressed in the interterritorial matrix of articular deep zone cartilage (at protein level). Isoform 1 and isoform 2 are expressed in brain. Isoform 1 is detected in lung and chondrocytes. Detected in cartilage, bone, cultured chondrocytes and lung, and at low levels in heart. Not detected in osteoblasts.

Its subcellular location is the secreted. The protein localises to the extracellular space. It localises to the extracellular matrix. The sequence is that of Cartilage acidic protein 1 (CRTAC1) from Homo sapiens (Human).